The primary structure comprises 1165 residues: MWRVKTLNLGLSPSPQKGKPAMSTPLRELKLQPEALADSGKGPSMISALTPYLCRLELKERCNNSSPVDFINTENNFLSEQFSHPSTHIEACQRESDPTPESNSLFHTLEEAIETVDDFVVDPRDDSIVESMVLLPFSLGQQQDLMLQAHLDTTAERTKSSLNESLGLEDLVGKEVAPCVEDSLTEIVAIRPEQPTFQDPPLGPSDTEDAPVDLVPSENVLNFSLARLSPSAVLAQDFSVDHVDPGEETVENRVLQEMETSFPTFPEEAELGDQAPAANAEAVSPLYLTSSLVEMGPREAPGPTVEDASRIPGLESETWMSPLAWLEKGVNTSVMLQNLRQSLSFSSVLQDAAVGNTPLATCSVGTSFTPPAPLEVGTKDSTSETERLLLGCRPPDLATLSRHDLEENLLNSLVLLEVLSHQLQAWKSQLTVPHREARDSSTQTDSSPCGVTKTPKHLQDSKEIRQALLQARNVMQSWGLVSGDLLSLLHLSLTHVQEGRVTVSQESQRSKTLVSSCSRVLKKLKAKLQSLKTECEEARHSKEMALKGKAAAEAVLEAFRAHASQRISQLEQGLTSMQEFRGLLQEAQTQLIGLHTEQKELAQQTVSLSSALQQDWTSVQLNYGIWAALLSWSRELTKKLTAKSRQALQERDAAIEEKKQVVKEVEQVSAHLEDCKGQIEQLKLENSRLTADLSAQLQILTSTESQLKEVRSQHSRCVQDLAVKDELLCQLTQSNKEQATQWQKEEMELKHIQAELLQQQAVLAKEVQDLRETVEFIDEESQVAHRELGQIESQLKVTLELLRERSLQCETLRDTVDSLRAELASTEAKHEKQALEKTHQHSQELRLLAEQLQSLTLFLQAKLKENKAESEIILPSTGSAPAQEHPLSNDSSISEQTPTAAVDEVPEPAPVPLLGSVKSAFTRVASMASFQPTETPDLEKSLAEMSTVLQELKSLCSLLQESKEEATGVLQREICELHSRLQAQEEEHQEALKAKEADMEKLNQALCLLRKNEKELLEVIQKQNEKILGQIDKSGQLINLREEVTQLTQSLRRAETETKVLQEALEGQLDPSCQLMATNWIQEKVFLSQEVSKLRVMFLEMKTEKEQLMDKYLSHRHILEENLRRSDTELKKLDDTIQHVYETLLSIPETMKSCKELQGLLEFLS.

Residues 1–23 (MWRVKTLNLGLSPSPQKGKPAMS) form a disordered region. Residues Ser12, Ser14, Ser66, Ser161, Ser321, Ser333, and Ser342 each carry the phosphoserine modification. Positions 431–457 (TVPHREARDSSTQTDSSPCGVTKTPKH) are disordered. A compositionally biased stretch (polar residues) spans 440-449 (SSTQTDSSPC). The interval 453-821 (KTPKHLQDSK…LRDTVDSLRA (369 aa)) is interaction with KNSTRN. The stretch at 509-856 (RSKTLVSSCS…LLAEQLQSLT (348 aa)) forms a coiled coil. Positions 875–907 (PSTGSAPAQEHPLSNDSSISEQTPTAAVDEVPE) are disordered. Residues 876 to 897 (STGSAPAQEHPLSNDSSISEQT) show a composition bias toward polar residues. Residues 937–1146 (DLEKSLAEMS…IQHVYETLLS (210 aa)) are a coiled coil. Ser946 is subject to Phosphoserine; by GSK3-beta.

In terms of assembly, homodimer, with a globular head domain and a long stalk. Homooligomer; the globular head domains associate, resulting in aster-like structures. Binds to microtubules in the mitotic spindle. Interacts with DCLRE1B/Apollo. Part of an astrin (SPAG5)-kinastrin (SKAP) complex containing KNSTRN, SPAG5, PLK1, DYNLL1 and SGO2A. Interacts with KNSTRN. Interacts with RPTOR; this interaction competes with RPTOR binding to MTOR, resulting in decreased mTORC1 formation. Interacts with G3BP1. The complex formed with G3BP1 and RPTOR is increased by oxidative stress. Interacts with OSBPL8, PCM1 and CDK5RAP2. Interacts (via C-terminus) with NUMA1 (via C-terminus); this interaction promotes the recruitment of SPAG5 to the microtubules at spindle poles in a dynein-dynactin-dependent manner. Interacts with DYNLL1. In terms of processing, phosphorylated by AURKA. In terms of tissue distribution, detected in testis, but not in the other tissues tested.

The protein resides in the cytoplasm. Its subcellular location is the cytoskeleton. It localises to the spindle. It is found in the spindle pole. The protein localises to the chromosome. The protein resides in the centromere. Its subcellular location is the kinetochore. It localises to the midbody. It is found in the microtubule organizing center. The protein localises to the centrosome. The protein resides in the centriolar satellite. Functionally, essential component of the mitotic spindle required for normal chromosome segregation and progression into anaphase. Required for chromosome alignment, normal timing of sister chromatid segregation, and maintenance of spindle pole architecture. In complex with SKAP, promotes stable microtubule-kinetochore attachments. May contribute to the regulation of separase activity. May regulate AURKA localization to mitotic spindle, but not to centrosomes and CCNB1 localization to both mitotic spindle and centrosomes. Involved in centriole duplication. Required for CDK5RAP22, CEP152, WDR62 and CEP63 centrosomal localization and promotes the centrosomal localization of CDK2. In non-mitotic cells, upon stress induction, inhibits mammalian target of rapamycin complex 1 (mTORC1) association and recruits the mTORC1 component RPTOR to stress granules (SGs), thereby preventing mTORC1 hyperactivation-induced apoptosis. May enhance GSK3B-mediated phosphorylation of other substrates, such as MAPT/TAU. This is Sperm-associated antigen 5 (Spag5) from Mus musculus (Mouse).